Here is a 683-residue protein sequence, read N- to C-terminus: DNA-directed RNA polymerase subunit beta' (683 aa).

Residues C69, C71, C87, and C90 each coordinate Zn(2+). Positions 489, 491, and 493 each coordinate Mg(2+).

The protein belongs to the RNA polymerase beta' chain family. RpoC1 subfamily. As to quaternary structure, in plastids the minimal PEP RNA polymerase catalytic core is composed of four subunits: alpha, beta, beta', and beta''. When a (nuclear-encoded) sigma factor is associated with the core the holoenzyme is formed, which can initiate transcription. The cofactor is Mg(2+). Zn(2+) is required as a cofactor.

It localises to the plastid. Its subcellular location is the chloroplast. It catalyses the reaction RNA(n) + a ribonucleoside 5'-triphosphate = RNA(n+1) + diphosphate. DNA-dependent RNA polymerase catalyzes the transcription of DNA into RNA using the four ribonucleoside triphosphates as substrates. In Saccharum hybrid (Sugarcane), this protein is DNA-directed RNA polymerase subunit beta'.